Reading from the N-terminus, the 111-residue chain is Prostate and testis expressed protein 2 (111 aa).

Positions M1–N18 are cleaved as a signal peptide. A UPAR/Ly6 domain is found at L27–P108. Intrachain disulfides connect C29–C55, C32–C40, C47–C78, and C82–C99.

Belongs to the PATE family. As to expression, expressed in prostate, testis, brain and lung.

The protein localises to the secreted. This Mus musculus (Mouse) protein is Prostate and testis expressed protein 2 (Pate2).